Here is a 312-residue protein sequence, read N- to C-terminus: HTH-type transcriptional regulator TdcA (312 aa).

Residues 7-64 (PKTQHLVVFQEVIRSGSIGSAAKELGLTQPAVSKIINDIEDYFGVELVVRKNTGVTLT) enclose the HTH lysR-type domain. The H-T-H motif DNA-binding region spans 24–43 (IGSAAKELGLTQPAVSKIIN).

Belongs to the LysR transcriptional regulatory family.

The protein operates within amino-acid degradation; L-threonine degradation via propanoate pathway [regulation]. Functionally, transcriptional activator for the tdcABCDE operon. This Escherichia coli O157:H7 protein is HTH-type transcriptional regulator TdcA (tdcA).